Consider the following 233-residue polypeptide: Octanoyltransferase (233 aa).

Positions 38 to 218 (AGGPDTLLLL…AVCDALDGVL (181 aa)) constitute a BPL/LPL catalytic domain. The segment covering 57–66 (RRTEPHERPL) has biased composition (basic and acidic residues). The tract at residues 57–77 (RRTEPHERPLDGTPVVDTDRG) is disordered. Substrate is bound by residues 76–83 (RGGKITWH), 148–150 (AIG), and 161–163 (GFA). The Acyl-thioester intermediate role is filled by Cys179.

Belongs to the LipB family.

Its subcellular location is the cytoplasm. The catalysed reaction is octanoyl-[ACP] + L-lysyl-[protein] = N(6)-octanoyl-L-lysyl-[protein] + holo-[ACP] + H(+). It participates in protein modification; protein lipoylation via endogenous pathway; protein N(6)-(lipoyl)lysine from octanoyl-[acyl-carrier-protein]: step 1/2. Its function is as follows. Catalyzes the transfer of endogenously produced octanoic acid from octanoyl-acyl-carrier-protein onto the lipoyl domains of lipoate-dependent enzymes. Lipoyl-ACP can also act as a substrate although octanoyl-ACP is likely to be the physiological substrate. The polypeptide is Octanoyltransferase (Mycolicibacterium paratuberculosis (strain ATCC BAA-968 / K-10) (Mycobacterium paratuberculosis)).